A 144-amino-acid chain; its full sequence is UPF0735 ACT domain-containing protein NT01CX_1681 (144 aa).

In terms of domain architecture, ACT spans 68–143 (TIGFLLSHKA…NVVKVSLIAM (76 aa)).

This sequence belongs to the UPF0735 family.

This is UPF0735 ACT domain-containing protein NT01CX_1681 from Clostridium novyi (strain NT).